The chain runs to 380 residues: MALNLRKTHPLLKIVNDSLIDLPTPSNISAWWNFGSLLGICLITQIITGLLLAMHYTADTSLAFTSVAHMCRNVQFGWLIRHLHANGASFFFICIYLHIGRGFYYGSYLNKETWNIGVILLLTLMATAFVGYVLPWGQMSFWGATVITNLFSAIPYVGQTLVEWLWGGFSVDNPTLTPLFALHFLLPFVIAGLTLVHLTFLHETGSNNPLGIPSDCDKIPFQPYYSIKDLLGFVLMLTPLIAMALFAPNFLGDPENFTPANPLVTPPHIKPEWYFLFAYAILRSIPNKLGGVLALAASVLVLFLIPLLHITKQRSMTFRPLSQMLFWTLVADLLILTWVGSQPVEHPFIIIGQLASLAYFTIILVLFPIVSALENKMLNL.

The next 4 membrane-spanning stretches (helical) occupy residues 34 to 54 (FGSLLGICLITQIITGLLLAM), 78 to 99 (WLIRHLHANGASFFFICIYLHI), 114 to 134 (WNIGVILLLTLMATAFVGYVL), and 179 to 199 (LFALHFLLPFVIAGLTLVHLT). Residues His-84 and His-98 each coordinate heme b. His-183 and His-197 together coordinate heme b. Residue His-202 participates in a ubiquinone binding. 4 helical membrane-spanning segments follow: residues 227–247 (IKDLLGFVLMLTPLIAMALFA), 289–309 (LGGVLALAASVLVLFLIPLLH), 321–341 (LSQMLFWTLVADLLILTWVGS), and 348–368 (FIIIGQLASLAYFTIILVLFP).

It belongs to the cytochrome b family. The cytochrome bc1 complex contains 11 subunits: 3 respiratory subunits (MT-CYB, CYC1 and UQCRFS1), 2 core proteins (UQCRC1 and UQCRC2) and 6 low-molecular weight proteins (UQCRH/QCR6, UQCRB/QCR7, UQCRQ/QCR8, UQCR10/QCR9, UQCR11/QCR10 and a cleavage product of UQCRFS1). This cytochrome bc1 complex then forms a dimer. Requires heme b as cofactor.

Its subcellular location is the mitochondrion inner membrane. Component of the ubiquinol-cytochrome c reductase complex (complex III or cytochrome b-c1 complex) that is part of the mitochondrial respiratory chain. The b-c1 complex mediates electron transfer from ubiquinol to cytochrome c. Contributes to the generation of a proton gradient across the mitochondrial membrane that is then used for ATP synthesis. The sequence is that of Cytochrome b (MT-CYB) from Aphelocoma coerulescens (Florida scrub-jay).